We begin with the raw amino-acid sequence, 39 residues long: U-limacoditoxin(13)-As54 (39 aa).

Positions 1–23 (MSKYIVLLVVSAIALLQFSMIEC) are cleaved as a signal peptide. The residue at position 37 (Phe-37) is a Phenylalanine amide.

Belongs to the FARP (FMRFamide related peptide) family. Expressed by the venom secretory cell of the spine. The spine is a cuticular structure containing a single large nucleated venom-secreting cell at its base. It is an independent unit capable of producing, storing and injecting venom. On the back of A.stimulea caterpillars, spines are grouped together by 50 to 100 to form scoli, of which there are eight.

It localises to the secreted. Strongly activates (at 30 uM) the human neuropeptide FF receptor 1 (NPFF1R), a G-protein coupled receptor, with an effect that is equipotent to the endogenous RFRP-1 ligand in activating NPFFR1. Is toxic when injected into Drosophila melanogaster. Also shows a moderate anthelmintic activity against the parasitic nematode H.contortus (drug susceptible Kirby isolate) (IC(50)=20.1 uM). This Acharia stimulea (Saddleback caterpillar moth) protein is U-limacoditoxin(13)-As54.